The following is a 511-amino-acid chain: Pickpocket protein 19 (511 aa).

The next 2 helical transmembrane spans lie at 59–79 (LWLAIVLGAVITGFSLYTVLM) and 471–491 (GIISLYIGASVMSFIELLFVL).

It belongs to the amiloride-sensitive sodium channel (TC 1.A.6) family. Expressed in the tracheal system. Expressed in the taste-sensing terminal organ of the larval head. In adults, expressed in hairs on the tibia, femur and wing margin, but not in hairs on the tarsi of the leg.

Its subcellular location is the membrane. In terms of biological role, part of a complex that plays a role in tracheal liquid clearance. In both larvae and adults, contributes to the behavioral response to salt. Probable role in sodium transport. This Drosophila melanogaster (Fruit fly) protein is Pickpocket protein 19 (ppk19).